A 477-amino-acid polypeptide reads, in one-letter code: tRNA-2-methylthio-N(6)-dimethylallyladenosine synthase (477 aa).

An MTTase N-terminal domain is found at lysine 3–glutamate 120. The [4Fe-4S] cluster site is built by cysteine 12, cysteine 49, cysteine 83, cysteine 157, cysteine 161, and cysteine 164. The 233-residue stretch at arginine 143–glutamine 375 folds into the Radical SAM core domain. Positions arginine 378–arginine 441 constitute a TRAM domain.

The protein belongs to the methylthiotransferase family. MiaB subfamily. In terms of assembly, monomer. [4Fe-4S] cluster is required as a cofactor.

The protein resides in the cytoplasm. The catalysed reaction is N(6)-dimethylallyladenosine(37) in tRNA + (sulfur carrier)-SH + AH2 + 2 S-adenosyl-L-methionine = 2-methylsulfanyl-N(6)-dimethylallyladenosine(37) in tRNA + (sulfur carrier)-H + 5'-deoxyadenosine + L-methionine + A + S-adenosyl-L-homocysteine + 2 H(+). Its function is as follows. Catalyzes the methylthiolation of N6-(dimethylallyl)adenosine (i(6)A), leading to the formation of 2-methylthio-N6-(dimethylallyl)adenosine (ms(2)i(6)A) at position 37 in tRNAs that read codons beginning with uridine. The polypeptide is tRNA-2-methylthio-N(6)-dimethylallyladenosine synthase (Aeromonas salmonicida (strain A449)).